Consider the following 403-residue polypeptide: Propionate kinase (403 aa).

Belongs to the acetokinase family. PduW subfamily.

Its subcellular location is the cytoplasm. It catalyses the reaction propanoate + ATP = propanoyl phosphate + ADP. Its pathway is polyol metabolism; 1,2-propanediol degradation. In terms of biological role, works with phosphate acetyltransferase (pta) to capture exogenous propionate and regenerate propionyl-CoA during degradation of 1,2-propanediol (1,2-PD). The protein is Propionate kinase of Citrobacter rodentium (strain ICC168) (Citrobacter freundii biotype 4280).